The primary structure comprises 102 residues: Small ribosomal subunit protein uS10 (102 aa).

Belongs to the universal ribosomal protein uS10 family. Part of the 30S ribosomal subunit.

In terms of biological role, involved in the binding of tRNA to the ribosomes. The polypeptide is Small ribosomal subunit protein uS10 (Staphylococcus saprophyticus subsp. saprophyticus (strain ATCC 15305 / DSM 20229 / NCIMB 8711 / NCTC 7292 / S-41)).